Here is a 241-residue protein sequence, read N- to C-terminus: Carboxy-S-adenosyl-L-methionine synthase (241 aa).

S-adenosyl-L-methionine is bound by residues Tyr-38, 63–65 (GCS), 88–89 (DN), 116–117 (DI), Asn-131, and Arg-198.

It belongs to the class I-like SAM-binding methyltransferase superfamily. Cx-SAM synthase family. Homodimer.

It catalyses the reaction prephenate + S-adenosyl-L-methionine = carboxy-S-adenosyl-L-methionine + 3-phenylpyruvate + H2O. Catalyzes the conversion of S-adenosyl-L-methionine (SAM) to carboxy-S-adenosyl-L-methionine (Cx-SAM). The chain is Carboxy-S-adenosyl-L-methionine synthase from Histophilus somni (strain 2336) (Haemophilus somnus).